The following is a 230-amino-acid chain: Cytidylate kinase (230 aa).

12–20 serves as a coordination point for ATP; that stretch reads GPSGAGKGT.

This sequence belongs to the cytidylate kinase family. Type 1 subfamily.

Its subcellular location is the cytoplasm. It catalyses the reaction CMP + ATP = CDP + ADP. It carries out the reaction dCMP + ATP = dCDP + ADP. In Shewanella pealeana (strain ATCC 700345 / ANG-SQ1), this protein is Cytidylate kinase.